Here is a 562-residue protein sequence, read N- to C-terminus: Arginine--tRNA ligase (562 aa).

A 'HIGH' region motif is present at residues 136–146; that stretch reads ANPTGPMHMGN.

Belongs to the class-I aminoacyl-tRNA synthetase family. Monomer.

It localises to the cytoplasm. It catalyses the reaction tRNA(Arg) + L-arginine + ATP = L-arginyl-tRNA(Arg) + AMP + diphosphate. The polypeptide is Arginine--tRNA ligase (argS) (Caldanaerobacter subterraneus subsp. tengcongensis (strain DSM 15242 / JCM 11007 / NBRC 100824 / MB4) (Thermoanaerobacter tengcongensis)).